The sequence spans 1601 residues: Rap guanine nucleotide exchange factor 6 (1601 aa).

An N-acetylmethionine modification is found at Met1. Disordered regions lie at residues Met1–Pro22 and Pro179–Asp250. A Phosphoserine modification is found at Ser3. Residues Ser187–Ser205 show a composition bias toward low complexity. Residues Val228–Asp241 are compositionally biased toward acidic residues. A nucleoside 3',5'-cyclic phosphate is bound at residue Ala280–Val399. One can recognise an N-terminal Ras-GEF domain in the interval Lys412–Ala526. Positions Gln530 to Phe615 constitute a PDZ domain. In terms of domain architecture, Ras-associating spans Pro749 to Glu835. Positions Ser860–Lys1088 constitute a Ras-GEF domain. 4 disordered regions span residues Ile1192–Ser1274, Glu1302–Pro1324, Leu1455–Thr1478, and Gln1571–Val1601. 2 stretches are compositionally biased toward low complexity: residues Ser1229 to Pro1238 and Ser1255 to Ser1274. A compositionally biased stretch (acidic residues) spans Thr1586–Val1601.

Interacts with the second PDZ domain of human PTP1e. Isoform 3 has highest expression levels in the brain, heart, liver, lung and placenta and is barely detectable in skeletal muscle, kidney and pancreas.

The protein resides in the cytoplasm. The protein localises to the cell membrane. Its function is as follows. Guanine nucleotide exchange factor (GEF) for Rap1A, Rap2A and M-Ras GTPases. Does not interact with cAMP. The polypeptide is Rap guanine nucleotide exchange factor 6 (RAPGEF6) (Homo sapiens (Human)).